The sequence spans 286 residues: Putative S-adenosyl-L-methionine-dependent methyltransferase FRAAL3718 (286 aa).

S-adenosyl-L-methionine is bound by residues aspartate 122 and 151–152; that span reads DL.

This sequence belongs to the UPF0677 family.

Its function is as follows. Exhibits S-adenosyl-L-methionine-dependent methyltransferase activity. The polypeptide is Putative S-adenosyl-L-methionine-dependent methyltransferase FRAAL3718 (Frankia alni (strain DSM 45986 / CECT 9034 / ACN14a)).